Consider the following 953-residue polypeptide: Protein translocase subunit SecA (953 aa).

ATP-binding positions include Gln84, 102 to 106 (GEGKT), and Asp491. The interval 832 to 953 (EPEPAPEQPS…RAEAKKNKRR (122 aa)) is disordered. The segment covering 841–865 (SVPVSVSRSAEPTPDLQAAAEAAAA) has biased composition (low complexity). Residues 898–907 (KGLDAPEKQR) are compositionally biased toward basic and acidic residues. Residues 908–934 (LNYSGPTEQGGVQTTSESAGEQGNGTS) are compositionally biased toward polar residues. Over residues 940-953 (RAAARAEAKKNKRR) the composition is skewed to basic and acidic residues.

Belongs to the SecA family. Monomer and homodimer. Part of the essential Sec protein translocation apparatus which comprises SecA, SecYEG and auxiliary proteins SecDF. Other proteins may also be involved.

Its subcellular location is the cell membrane. It localises to the cytoplasm. It catalyses the reaction ATP + H2O + cellular proteinSide 1 = ADP + phosphate + cellular proteinSide 2.. In terms of biological role, part of the Sec protein translocase complex. Interacts with the SecYEG preprotein conducting channel. Has a central role in coupling the hydrolysis of ATP to the transfer of proteins into and across the cell membrane, serving as an ATP-driven molecular motor driving the stepwise translocation of polypeptide chains across the membrane. The chain is Protein translocase subunit SecA from Saccharopolyspora erythraea (strain ATCC 11635 / DSM 40517 / JCM 4748 / NBRC 13426 / NCIMB 8594 / NRRL 2338).